A 671-amino-acid polypeptide reads, in one-letter code: Leucine aminopeptidase 2 (671 aa).

Residues 184 to 186 and 311 to 316 contribute to the substrate site; these read QLE and PYGGME. A Zn(2+)-binding site is contributed by H340. E341 functions as the Proton acceptor in the catalytic mechanism. Positions 344 and 363 each coordinate Zn(2+). The active-site Proton donor is Y429.

This sequence belongs to the peptidase M1 family. Zn(2+) serves as cofactor.

The protein resides in the cytoplasm. The protein localises to the nucleus. The catalysed reaction is an epoxide + H2O = an ethanediol. Its activity is regulated as follows. Inhibited by 3-(4-benzyloxyphenyl)-2-(R)-amino-1-propanethiol (thioamine) and N-hydroxy-N-(2-(S)-amino-3-(4-benzyloxyphenyl)propyl)-5-carboxypen-tanamide (hydroxamic acid). The aminopeptidase activity is stimulated by LTA(4). Functionally, aminopeptidase that preferentially cleaves di- and tripeptides. Also has low epoxide hydrolase activity (in vitro). Can hydrolyze the epoxide leukotriene LTA(4) but it forms preferentially 5,6-dihydroxy-7,9,11,14-eicosatetraenoic acid rather than the cytokine leukotriene B(4) as the product compared to the homologous mammalian enzyme (in vitro). The sequence is that of Leucine aminopeptidase 2 from Saccharomyces cerevisiae (strain YJM789) (Baker's yeast).